We begin with the raw amino-acid sequence, 155 residues long: Putative pre-16S rRNA nuclease (155 aa).

Belongs to the YqgF nuclease family.

The protein resides in the cytoplasm. Its function is as follows. Could be a nuclease involved in processing of the 5'-end of pre-16S rRNA. The chain is Putative pre-16S rRNA nuclease from Corynebacterium jeikeium (strain K411).